Reading from the N-terminus, the 350-residue chain is Protein-glutamate methylesterase/protein-glutamine glutaminase (350 aa).

In terms of domain architecture, Response regulatory spans 5–122; it reads RVLCVDDSAL…REGMLAYSEL (118 aa). 4-aspartylphosphate is present on aspartate 56. A CheB-type methylesterase domain is found at 153 to 345; the sequence is LLSSEKLIAI…QRMLAQISAG (193 aa). Residues serine 165, histidine 191, and aspartate 287 contribute to the active site.

This sequence belongs to the CheB family. Phosphorylated by CheA. Phosphorylation of the N-terminal regulatory domain activates the methylesterase activity.

The protein localises to the cytoplasm. It catalyses the reaction [protein]-L-glutamate 5-O-methyl ester + H2O = L-glutamyl-[protein] + methanol + H(+). It carries out the reaction L-glutaminyl-[protein] + H2O = L-glutamyl-[protein] + NH4(+). Its function is as follows. Involved in chemotaxis. Part of a chemotaxis signal transduction system that modulates chemotaxis in response to various stimuli. Catalyzes the demethylation of specific methylglutamate residues introduced into the chemoreceptors (methyl-accepting chemotaxis proteins or MCP) by CheR. Also mediates the irreversible deamidation of specific glutamine residues to glutamic acid. Does not interact with the C-terminal pentapeptide of the chemoreceptors. The protein is Protein-glutamate methylesterase/protein-glutamine glutaminase of Pectobacterium atrosepticum (strain SCRI 1043 / ATCC BAA-672) (Erwinia carotovora subsp. atroseptica).